Here is a 117-residue protein sequence, read N- to C-terminus: Large ribosomal subunit protein bL20 (117 aa).

The protein belongs to the bacterial ribosomal protein bL20 family.

Its function is as follows. Binds directly to 23S ribosomal RNA and is necessary for the in vitro assembly process of the 50S ribosomal subunit. It is not involved in the protein synthesizing functions of that subunit. The polypeptide is Large ribosomal subunit protein bL20 (Geotalea daltonii (strain DSM 22248 / JCM 15807 / FRC-32) (Geobacter daltonii)).